Consider the following 188-residue polypeptide: Elongation factor P (188 aa).

Belongs to the elongation factor P family.

The protein resides in the cytoplasm. Its pathway is protein biosynthesis; polypeptide chain elongation. Functionally, involved in peptide bond synthesis. Stimulates efficient translation and peptide-bond synthesis on native or reconstituted 70S ribosomes in vitro. Probably functions indirectly by altering the affinity of the ribosome for aminoacyl-tRNA, thus increasing their reactivity as acceptors for peptidyl transferase. This is Elongation factor P from Anaplasma marginale (strain Florida).